Reading from the N-terminus, the 532-residue chain is Di/tripeptide-binding protein 2 (532 aa).

A signal peptide spans 1–24 (MRPRSALRYSLLLLAFAASAAIQA).

This sequence belongs to the bacterial solute-binding protein 5 family. As to quaternary structure, the complex is composed of two ATP-binding proteins (DppD and DppF), two transmembrane proteins (DppB and DppC) and a solute-binding protein (DppA2). Five orthologous SBPs (DppA1-A5) are present in P.aeruginosa, which increases the substrate specificity of the DppBCDF transporter.

In terms of biological role, part of the ABC transporter DppABCDF involved in the uptake of various di/tripeptides. Shows high flexibility on substrate recognition. Efficiently uses tripeptides. This is Di/tripeptide-binding protein 2 from Pseudomonas aeruginosa (strain UCBPP-PA14).